Here is a 351-residue protein sequence, read N- to C-terminus: Anthranilate phosphoribosyltransferase (351 aa).

5-phospho-alpha-D-ribose 1-diphosphate-binding positions include Gly-80, 83 to 84 (GD), Thr-88, 90 to 93 (NIST), 108 to 116 (KHGNRSVTS), and Ser-120. Gly-80 contributes to the anthranilate binding site. Ser-92 serves as a coordination point for Mg(2+). Residue Asn-111 participates in anthranilate binding. Arg-166 serves as a coordination point for anthranilate. 2 residues coordinate Mg(2+): Asp-229 and Glu-230.

This sequence belongs to the anthranilate phosphoribosyltransferase family. Homodimer. The cofactor is Mg(2+).

It carries out the reaction N-(5-phospho-beta-D-ribosyl)anthranilate + diphosphate = 5-phospho-alpha-D-ribose 1-diphosphate + anthranilate. The protein operates within amino-acid biosynthesis; L-tryptophan biosynthesis; L-tryptophan from chorismate: step 2/5. In terms of biological role, catalyzes the transfer of the phosphoribosyl group of 5-phosphorylribose-1-pyrophosphate (PRPP) to anthranilate to yield N-(5'-phosphoribosyl)-anthranilate (PRA). In Chlorobium chlorochromatii (strain CaD3), this protein is Anthranilate phosphoribosyltransferase.